Consider the following 384-residue polypeptide: NAD(P) transhydrogenase subunit alpha part 1 (384 aa).

Positions 126 to 136 are RQD loop; involved in interaction with PntB; it reads PRISRAQSMDI. Residues 127-129, 132-135, 180-182, 202-204, Gly-234, Gln-247, and Leu-266 each bind NAD(+); these read RIS, QSMD, VGV, and DVR.

Belongs to the AlaDH/PNT family. As to quaternary structure, heterotrimer of two alpha chains and a beta (PntB) chain; in Rhodospirillum, the alpha chain is made of two subunits (PntAA and PntAB) and forms a dimer.

The catalysed reaction is NAD(+) + NADPH + H(+)(in) = NADH + NADP(+) + H(+)(out). Functionally, the transhydrogenation between NADH and NADP is coupled to respiration and ATP hydrolysis and functions as a proton pump across the membrane. The protein is NAD(P) transhydrogenase subunit alpha part 1 (pntAA) of Rhodospirillum rubrum (strain ATCC 11170 / ATH 1.1.1 / DSM 467 / LMG 4362 / NCIMB 8255 / S1).